We begin with the raw amino-acid sequence, 217 residues long: Small ribosomal subunit protein uS5 (217 aa).

The S5 DRBM domain occupies 49–112 (LEEKVLDVKL…AQAKKNIIRV (64 aa)).

It belongs to the universal ribosomal protein uS5 family. Part of the 30S ribosomal subunit. Contacts protein S4.

Functionally, with S4 and S12 plays an important role in translational accuracy. The sequence is that of Small ribosomal subunit protein uS5 from Methanocaldococcus jannaschii (strain ATCC 43067 / DSM 2661 / JAL-1 / JCM 10045 / NBRC 100440) (Methanococcus jannaschii).